Here is a 294-residue protein sequence, read N- to C-terminus: Acetaldehyde dehydrogenase (294 aa).

Residue 11-14 (SGNI) participates in NAD(+) binding. Residue Cys126 is the Acyl-thioester intermediate of the active site. Residues 157–165 (SAGPGTRAN) and Asn269 each bind NAD(+).

Belongs to the acetaldehyde dehydrogenase family.

The catalysed reaction is acetaldehyde + NAD(+) + CoA = acetyl-CoA + NADH + H(+). This Geobacillus stearothermophilus (Bacillus stearothermophilus) protein is Acetaldehyde dehydrogenase (pheF).